A 547-amino-acid polypeptide reads, in one-letter code: Varicidin biosynthesis cluster MFS-type transporer (547 aa).

Residues 1 to 17 (MTTSTSKNAISKSSQED) are compositionally biased toward polar residues. The disordered stretch occupies residues 1–33 (MTTSTSKNAISKSSQEDLCSDTKDKGSSGGGNE). The next 11 helical transmembrane spans lie at 47-67 (LVLLFVGLALSVFCLSLVCIS), 156-176 (LAPSLLLPGLCPCIVAQSVFT), 183-203 (WCFWINLPLGGVTAVAVFLFV), 224-244 (ALGTCILMPLIICLLLALQWG), 252-272 (SWRVVLCLVLFTVLLVAWLYV), 296-316 (ILFTFGINGSMFIIVYYVPIW), 330-350 (INFLACSGSMSVAAIIAGTLV), 360-382 (GQWRIFNYTTLVSIATGLIWRYN), 392-412 (AGTLVMFGFGAGSGMQMPFIA), 422-442 (ISLGSSLIILIQTMGGAVFLA), and 503-523 (CFLVCIVLACLTIIADAGMEW).

It belongs to the major facilitator superfamily. TCR/Tet family.

It is found in the cell membrane. Functionally, MFS-type transporer; part of the gene cluster that mediates the biosynthesis of varicidin A, an antifungal natural product containing a cis-octahydrodecalin core. The polypeptide is Varicidin biosynthesis cluster MFS-type transporer (Talaromyces variabilis (Penicillium variabile)).